Here is a 743-residue protein sequence, read N- to C-terminus: Catalase-peroxidase (743 aa).

Positions 1-22 are disordered; the sequence is MEKQSNDAAVAGAPNDHGAAKC. The segment at residues 105 to 227 is a cross-link (tryptophyl-tyrosyl-methioninium (Trp-Tyr) (with M-253)); that stretch reads WHSAGTYRIT…LGAVQMGLIY (123 aa). The active-site Proton acceptor is His-106. Residues 227-253 constitute a cross-link (tryptophyl-tyrosyl-methioninium (Tyr-Met) (with W-105)); it reads YVNPEGPNGNPDPVAAAKDIRETFFRM. His-268 provides a ligand contact to heme b.

It belongs to the peroxidase family. Peroxidase/catalase subfamily. Homodimer or homotetramer. Heme b is required as a cofactor. Formation of the three residue Trp-Tyr-Met cross-link is important for the catalase, but not the peroxidase activity of the enzyme.

The catalysed reaction is H2O2 + AH2 = A + 2 H2O. It catalyses the reaction 2 H2O2 = O2 + 2 H2O. In terms of biological role, bifunctional enzyme with both catalase and broad-spectrum peroxidase activity. The polypeptide is Catalase-peroxidase (Solibacter usitatus (strain Ellin6076)).